Reading from the N-terminus, the 504-residue chain is ATP synthase subunit alpha, chloroplastic (504 aa).

170 to 177 lines the ATP pocket; it reads GDRQTGKT.

This sequence belongs to the ATPase alpha/beta chains family. As to quaternary structure, F-type ATPases have 2 components, CF(1) - the catalytic core - and CF(0) - the membrane proton channel. CF(1) has five subunits: alpha(3), beta(3), gamma(1), delta(1), epsilon(1). CF(0) has four main subunits: a, b, b' and c.

It localises to the plastid. Its subcellular location is the chloroplast thylakoid membrane. The enzyme catalyses ATP + H2O + 4 H(+)(in) = ADP + phosphate + 5 H(+)(out). Its function is as follows. Produces ATP from ADP in the presence of a proton gradient across the membrane. The alpha chain is a regulatory subunit. In Pyropia yezoensis (Susabi-nori), this protein is ATP synthase subunit alpha, chloroplastic.